The chain runs to 1102 residues: Phosphatidylinositol 4,5-bisphosphate 3-kinase catalytic subunit gamma isoform (1102 aa).

One can recognise a PI3K-ABD domain in the interval 34–141; it reads SMELIPIEFV…PGQIHVVQRH (108 aa). The PI3K-RBD domain maps to 217-309; the sequence is NNCVFIVIHR…GEEIHLVLDT (93 aa). The C2 PI3K-type domain occupies 357–521; it reads CDRKFRVKIR…NSMSISILLD (165 aa). One can recognise a PIK helical domain in the interval 541–723; the sequence is DRVRAEMPNQ…AVILEAYLRG (183 aa). A PI3K/PI4K catalytic domain is found at 797–1080; sequence VIEKCKVMAS…QIEVCRDKGW (284 aa). The interval 803 to 809 is G-loop; that stretch reads VMASKKK. ATP contacts are provided by residues 829–838 and 864–872; these read GIIFKHGDDL and LLPYGCIST. Residues 943 to 951 are catalytic loop; sequence GIGDRHNDN. 961-969 provides a ligand contact to ATP; that stretch reads FHIDFGHIL. An activation loop region spans residues 962–988; sequence HIDFGHILGNYKSFLGINKERVPFVLT. Thr1024 is modified (phosphothreonine; by PKA). Phosphoserine; by autocatalysis is present on Ser1101.

It belongs to the PI3/PI4-kinase family. As to quaternary structure, heterodimer of a catalytic subunit PIK3CG and a PIK3R5 or PIK3R6 regulatory subunit. Interacts with GRK2 through the PIK helical domain. Interaction with GRK2 is required for targeting to agonist-occupied receptor. Interacts with PDE3B; regulates PDE3B activity and thereby cAMP levels in cells. Interacts with TPM2. Interacts with EPHA8; regulates integrin-mediated cell adhesion to substrate. Interacts with HRAS; the interaction is required for membrane recruitment and beta-gamma G protein dimer-dependent activation of the PI3K gamma complex PIK3CG:PIK3R6. Autophosphorylation at Ser-1101 has no effect on the phosphatidylinositol-4,5-bisphosphate 3-kinase activity.

It is found in the cytoplasm. The protein localises to the cell membrane. The catalysed reaction is a 1,2-diacyl-sn-glycero-3-phospho-(1D-myo-inositol-4,5-bisphosphate) + ATP = a 1,2-diacyl-sn-glycero-3-phospho-(1D-myo-inositol-3,4,5-trisphosphate) + ADP + H(+). It catalyses the reaction a 1,2-diacyl-sn-glycero-3-phospho-(1D-myo-inositol) + ATP = a 1,2-diacyl-sn-glycero-3-phospho-(1D-myo-inositol-3-phosphate) + ADP + H(+). It carries out the reaction a 1,2-diacyl-sn-glycero-3-phospho-(1D-myo-inositol 4-phosphate) + ATP = a 1,2-diacyl-sn-glycero-3-phospho-(1D-myo-inositol-3,4-bisphosphate) + ADP + H(+). The enzyme catalyses L-seryl-[protein] + ATP = O-phospho-L-seryl-[protein] + ADP + H(+). It functions in the pathway phospholipid metabolism; phosphatidylinositol phosphate biosynthesis. With respect to regulation, activated by both the alpha and the beta-gamma G proteins following stimulation of G protein-coupled receptors (GPCRs). Activation by GPCRs is assisted by the regulatory subunits (PIK3R5 or PIK3R6) leading to the translocation from the cytosol to the plasma membrane and to kinase activation. When bound to PIK3R5 the PI3K activity of PIK3CG could be activated greater than 100-fold by the beta-gamma G proteins. Functionally, phosphoinositide-3-kinase (PI3K) that phosphorylates PtdIns(4,5)P2 (Phosphatidylinositol 4,5-bisphosphate) to generate phosphatidylinositol 3,4,5-trisphosphate (PIP3). PIP3 plays a key role by recruiting PH domain-containing proteins to the membrane, including AKT1 and PDPK1, activating signaling cascades involved in cell growth, survival, proliferation, motility and morphology. Links G-protein coupled receptor activation to PIP3 production. Involved in immune, inflammatory and allergic responses. Modulates leukocyte chemotaxis to inflammatory sites and in response to chemoattractant agents. May control leukocyte polarization and migration by regulating the spatial accumulation of PIP3 and by regulating the organization of F-actin formation and integrin-based adhesion at the leading edge. Controls motility of dendritic cells. Participates in T-lymphocyte migration. Regulates T-lymphocyte proliferation and cytokine production. Required for B-lymphocyte development and signaling. Together with other PI3Ks are involved in the oxidative burst produced by neutrophils in response to chemotactic agents. Together with PIK3CD regulate neutrophil extravasation. Together with PIK3CB promotes platelet aggregation and thrombosis. Regulates alpha-IIb/beta-3 integrins (ITGA2B/ ITGB3) adhesive function in platelets downstream of P2Y12 through a lipid kinase activity-independent mechanism. May have also a lipid kinase activity-dependent function in platelet aggregation. Involved in endothelial progenitor cell migration. Negative regulator of cardiac contractility. Modulates cardiac contractility by anchoring protein kinase A (PKA) and PDE3B activation, reducing cAMP levels. Regulates cardiac contractility also by promoting beta-adrenergic receptor internalization by binding to GRK2 and by non-muscle tropomyosin phosphorylation. Also has serine/threonine protein kinase activity: both lipid and protein kinase activities are required for beta-adrenergic receptor endocytosis. May also have a scaffolding role in modulating cardiac contractility. Contribute to cardiac hypertrophy under pathological stress. Through simultaneous binding of PDE3B to RAPGEF3 and PIK3R6 is assembled in a signaling complex in which the PI3K gamma complex is activated by RAPGEF3 and which is involved in angiogenesis. In neutrophils, participates in a phospholipase C-activating N-formyl peptide-activated GPCR (G protein-coupled receptor) signaling pathway downstream of RASGRP4-mediated Ras-activation, to promote neutrophil functional responses. This is Phosphatidylinositol 4,5-bisphosphate 3-kinase catalytic subunit gamma isoform (PIK3CG) from Sus scrofa (Pig).